We begin with the raw amino-acid sequence, 332 residues long: Nucleoid-associated protein VP2128 (332 aa).

Belongs to the YejK family.

It localises to the cytoplasm. The protein localises to the nucleoid. This is Nucleoid-associated protein VP2128 from Vibrio parahaemolyticus serotype O3:K6 (strain RIMD 2210633).